The chain runs to 406 residues: Probable tRNA sulfurtransferase (406 aa).

The THUMP domain occupies 60–162 (PEAKARLQDT…PGAALLEVER (103 aa)). ATP contacts are provided by residues 180-181 (LL), 205-206 (HF), arginine 262, glycine 284, and glutamine 293.

It belongs to the ThiI family.

It localises to the cytoplasm. It carries out the reaction [ThiI sulfur-carrier protein]-S-sulfanyl-L-cysteine + a uridine in tRNA + 2 reduced [2Fe-2S]-[ferredoxin] + ATP + H(+) = [ThiI sulfur-carrier protein]-L-cysteine + a 4-thiouridine in tRNA + 2 oxidized [2Fe-2S]-[ferredoxin] + AMP + diphosphate. It catalyses the reaction [ThiS sulfur-carrier protein]-C-terminal Gly-Gly-AMP + S-sulfanyl-L-cysteinyl-[cysteine desulfurase] + AH2 = [ThiS sulfur-carrier protein]-C-terminal-Gly-aminoethanethioate + L-cysteinyl-[cysteine desulfurase] + A + AMP + 2 H(+). It participates in cofactor biosynthesis; thiamine diphosphate biosynthesis. In terms of biological role, catalyzes the ATP-dependent transfer of a sulfur to tRNA to produce 4-thiouridine in position 8 of tRNAs, which functions as a near-UV photosensor. Also catalyzes the transfer of sulfur to the sulfur carrier protein ThiS, forming ThiS-thiocarboxylate. This is a step in the synthesis of thiazole, in the thiamine biosynthesis pathway. The sulfur is donated as persulfide by IscS. This is Probable tRNA sulfurtransferase from Thermus thermophilus (strain ATCC 27634 / DSM 579 / HB8).